Consider the following 1753-residue polypeptide: MTVLQPPSSVCYPLNLPIVPNPNLDEATRKKLTLECRTGAAVELARSGVFVHGGLTLPLNLTIINSLQLQKELILYFGKQKDRNADFKTLADWISPEIFFLDLISRTWQRINTTIDTTSENELNNGLSFKERLFHSMCFTESNIYIFGGLMVSPHNGYELIATNELWKLDLKTKCWSLISENPQITRRFNHSMHVLNENNENQDTKLIIVGGLDNMDIPVKKIDIFNLRTSLWESESKSDENPASKGSSKILVNIDGMPISLSHDSNFSVLIENNQAEIPTLALYYPQREANTSRRGTDDGSFSTYAHDLDDKSKLPKHHHHHHGDLKYFESDDADENAVKTLMSPIVILPLLGNSQGARMTSNPTQNNKENSILQVPFHLQYPSGNYFNYNIVVIGFYPDPQPSNLHCFIYNIASGKWIRVNIACTECSISMHRFWKLLIWKSHHQALLLGTRTDDFCSPSVQKFDHILSFSLPMLNGYNKLVNTKHTRTNNGIANSHNLNVNLSLYDHLPYSNSSTIEHTNPYTVTQGYSLDDSGIPRLTSTATSQFENYSRYITVPLEMESTSSIFPPYAMVLGKDALEIFGKTLSDFEFITADGDSIGVPVYLLRKRWGRYFDSLLSNGYANTSFNYEFNGDTSNIISFSPHTASKTTKFGNSSQSSNGSLEKYFSKNGNSKSNSNTSLKKPHSVDFTSSTSSPKQRAISHNKLSPSEPILCADEEDSRSNTLKQHATGDTGLKETGTSNKRPISTTCSSTGMVFRVPFQDMKNSKLGLSEQSGRSTRASSVSPPPVYKKSTNDGNDSNCTLSNTPLVYRRASTVGTTTNSSVDDGFSSIRRASHPLQSYIIAKSSPSSISKASPAEKAFSRRKSSALRFIASPNQSRQTSFASTASTASVVSSTSGRRRNSNQISHLGSSASLPNSPILPVLNIPLPPQEKIPLEPLPPVPKAPSRRSSSLAEYVQFGRDSPVASRRSSHSTRKSSSSDARRISNSSLLRNTLDSQLLSNSYGSDIPYEASIQEYGMNNGRDEEEDGDNQDYGCISPSNIRPIFSTINAININGNFKEGEFFSSKSYINNEKSRRLSYISNPESVESTNSNNNAIIELEPLLTPRSLYMPWSTASVRAFAEFFYTAQINGKWLLAPVTLDLLIMAKIYEIPILYELITEVLYKIISKKEEGLSVTCEALLNLFQQKVSRYCNENEGKIRKQLDSSESYQDTLEIKRSLANIDNGYVDSYLLRNTSMAQSIHYTDDSNGETEIDMHHTGISSIGSLANRAVPTVFAGGPRDSHNSIGSIAFPSNSGVQNIRRSVSLFSPATKKKSSLSRETDPLDTSDQFTDDVPDSGPVSRQQNFPRRSSSFTETVPTEPTRYNYQNLDSSKSNRASDDKEEQNEQATLQDISNFDKYKVETLQKRNSNDGKDLDRTNDPLKNRGTEIPQNSSNLETDPFIRDSFDSDSGSSFRSDSDDLDSQLGILPFTKMNKKLQEQTSQEFDDSIDPLYKIGSSTPGSSRLHGSFSKYIRPNSQREDGSEYVNISSLENMVSPNALPPVDYVMKSIYRTSVLVNDSNLMTRTKEAIELSKVLKKLKKKVLQDISQMDDEMRETGKPIFARGSSSPTLSRQHSDVATPLKQQENTRPALKFASSSPISEGFRKSSIKFSQAPSTQISPRTSVTDFTASQQRRQHMNKRFSTQTTHSTSALFMNPAFMPSAVNTGRKESEGHCEDRSATANRTNRKEDATTNDNDNIAPFPFFGKRR.

Kelch repeat units follow at residues 143 to 198 (NIYI…VLNE) and 206 to 253 (KLII…KILV). Position 298 is a phosphothreonine (Thr-298). A compositionally biased stretch (polar residues) spans 651–664 (TTKFGNSSQSSNGS). 2 disordered regions span residues 651-753 (TTKF…TTCS) and 771-807 (LGLS…CTLS). A compositionally biased stretch (low complexity) spans 670–683 (SKNGNSKSNSNTSL). Polar residues-rich tracts occupy residues 690 to 699 (DFTSSTSSPK), 740 to 753 (TGTS…TTCS), 774 to 783 (SEQSGRSTRA), and 797 to 807 (NDGNDSNCTLS). Ser-838 bears the Phosphoserine mark. Disordered stretches follow at residues 875 to 915 (IASP…LGSS), 938 to 957 (PLEP…SSLA), and 962 to 988 (FGRD…ARRI). Residues 880 to 900 (QSRQTSFASTASTASVVSSTS) show a composition bias toward low complexity. The span at 938 to 947 (PLEPLPPVPK) shows a compositional bias: pro residues. The segment covering 979–988 (KSSSSDARRI) has biased composition (low complexity). Residues Ser-1289, Ser-1307, and Ser-1356 each carry the phosphoserine modification. 3 disordered regions span residues 1312 to 1467 (SPAT…DLDS), 1604 to 1686 (PIFA…NKRF), and 1706 to 1753 (SAVN…GKRR). The span at 1344–1379 (VSRQQNFPRRSSSFTETVPTEPTRYNYQNLDSSKSN) shows a compositional bias: polar residues. Residues 1399 to 1430 (NFDKYKVETLQKRNSNDGKDLDRTNDPLKNRG) are compositionally biased toward basic and acidic residues. A compositionally biased stretch (polar residues) spans 1653–1677 (IKFSQAPSTQISPRTSVTDFTASQQ). Ser-1664 is modified (phosphoserine). Residues 1711–1723 (GRKESEGHCEDRS) show a composition bias toward basic and acidic residues.

It localises to the cytoplasm. Functionally, negatively regulates early sporulation-specific genes. Seems to exert its function by positively regulating the Ras/cAMP pathway. Required for growth under alkaline conditions. Acts synergetically with MDS3. In Saccharomyces cerevisiae (strain ATCC 204508 / S288c) (Baker's yeast), this protein is Negative regulator of sporulation PMD1 (PMD1).